Consider the following 520-residue polypeptide: Sodium-dependent dicarboxylate transporter SdcS (520 aa).

The next 14 helical transmembrane spans lie at 30–50 (TGQL…LLFF), 55–75 (LPWK…WWIT), 77–97 (AIPI…GHIL), 104–124 (SEYG…AIAM), 160–180 (SMFV…LAII), 207–227 (IGYA…PLII), 242–262 (FAKW…ITWL), 298–318 (KVVQ…EFLL), 323–343 (VTSS…LFII), 362–382 (ELPW…KGIS), 399–419 (GVSP…LTEV), 428–448 (MILP…LLLM), 452–472 (AMAA…AIIF), and 491–511 (LISA…VLGI).

Belongs to the SLC13A/DASS transporter (TC 2.A.47) family. NADC subfamily.

Its subcellular location is the cell membrane. Its function is as follows. Mediates the transport of the dicarboxylates fumarate, malate, and succinate across the cytoplasmic membrane via a Na(+)-electrochemical gradient. This chain is Sodium-dependent dicarboxylate transporter SdcS (sdcS), found in Staphylococcus aureus (strain MRSA252).